Consider the following 561-residue polypeptide: Dihydroxy-acid dehydratase (561 aa).

C50 contacts [2Fe-2S] cluster. D82 lines the Mg(2+) pocket. Residue C123 coordinates [2Fe-2S] cluster. Positions 124 and 125 each coordinate Mg(2+). K125 bears the N6-carboxylysine mark. Position 195 (C195) interacts with [2Fe-2S] cluster. E447 contributes to the Mg(2+) binding site. Residue S473 is the Proton acceptor of the active site.

Belongs to the IlvD/Edd family. As to quaternary structure, homodimer. Requires [2Fe-2S] cluster as cofactor. The cofactor is Mg(2+).

It catalyses the reaction (2R)-2,3-dihydroxy-3-methylbutanoate = 3-methyl-2-oxobutanoate + H2O. The enzyme catalyses (2R,3R)-2,3-dihydroxy-3-methylpentanoate = (S)-3-methyl-2-oxopentanoate + H2O. It participates in amino-acid biosynthesis; L-isoleucine biosynthesis; L-isoleucine from 2-oxobutanoate: step 3/4. It functions in the pathway amino-acid biosynthesis; L-valine biosynthesis; L-valine from pyruvate: step 3/4. In terms of biological role, functions in the biosynthesis of branched-chain amino acids. Catalyzes the dehydration of (2R,3R)-2,3-dihydroxy-3-methylpentanoate (2,3-dihydroxy-3-methylvalerate) into 2-oxo-3-methylpentanoate (2-oxo-3-methylvalerate) and of (2R)-2,3-dihydroxy-3-methylbutanoate (2,3-dihydroxyisovalerate) into 2-oxo-3-methylbutanoate (2-oxoisovalerate), the penultimate precursor to L-isoleucine and L-valine, respectively. The sequence is that of Dihydroxy-acid dehydratase from Chloroflexus aurantiacus (strain ATCC 29366 / DSM 635 / J-10-fl).